The primary structure comprises 1187 residues: uncharacterized protein (1187 aa).

Residues 38-57 are compositionally biased toward polar residues; it reads KNNQDIPTSNTNISPKPISQ. Disordered regions lie at residues 38 to 127, 189 to 215, 248 to 287, 358 to 415, 443 to 490, 536 to 689, 752 to 840, and 1079 to 1187; these read KNNQ…NSPT, ISRS…IHLN, TQPP…SQLQ, NNNS…NSNS, FPNN…INNN, QFPF…SSLN, SINN…NKSI, and HNNN…NLQK. 4 stretches are compositionally biased toward low complexity: residues 71–84, 104–124, 190–215, and 248–274; these read KPIV…STLI, PSSS…SIPN, SRSS…IHLN, and TQPP…QAPH. Residues 443–455 are compositionally biased toward polar residues; it reads FPNNTDENYPSDH. Low complexity-rich tracts occupy residues 458–490, 543–570, 585–653, 662–689, 752–790, and 797–809; these read NDNN…INNN, TTES…SSSA, INNL…SNIN, PNSP…SSLN, SINN…TTNN, and NYKI…NIDN. Positions 815–832 are enriched in acidic residues; the sequence is NDDDNDDDDDDDVDDNDD. Low complexity-rich tracts occupy residues 1079–1149 and 1156–1174; these read HNNN…PSNN and KNNN…NNTN.

This is an uncharacterized protein from Dictyostelium discoideum (Social amoeba).